We begin with the raw amino-acid sequence, 206 residues long: Small ribosomal subunit protein uS4 (206 aa).

The 63-residue stretch at 96 to 158 (SRLDNVVYRM…AKKQLRIQNA (63 aa)) folds into the S4 RNA-binding domain.

Belongs to the universal ribosomal protein uS4 family. Part of the 30S ribosomal subunit. Contacts protein S5. The interaction surface between S4 and S5 is involved in control of translational fidelity.

In terms of biological role, one of the primary rRNA binding proteins, it binds directly to 16S rRNA where it nucleates assembly of the body of the 30S subunit. With S5 and S12 plays an important role in translational accuracy. The sequence is that of Small ribosomal subunit protein uS4 from Francisella tularensis subsp. holarctica (strain OSU18).